The chain runs to 50 residues: Large ribosomal subunit protein bL32c (50 aa).

Belongs to the bacterial ribosomal protein bL32 family.

The protein resides in the plastid. It localises to the chloroplast. The sequence is that of Large ribosomal subunit protein bL32c from Lotus japonicus (Lotus corniculatus var. japonicus).